Consider the following 358-residue polypeptide: 5,10-methenyltetrahydromethanopterin hydrogenase (358 aa).

This sequence belongs to the HMD family. As to quaternary structure, homotetramer.

The catalysed reaction is 5,10-methenyl-5,6,7,8-tetrahydromethanopterin + H2 = 5,10-methylenetetrahydromethanopterin + H(+). The protein operates within one-carbon metabolism; methanogenesis from CO(2); 5,10-methylene-5,6,7,8-tetrahydromethanopterin from 5,10-methenyl-5,6,7,8-tetrahydromethanopterin (hydrogen route): step 1/1. Its activity is regulated as follows. Activity requires salt; 100 mM potassium phosphate, potassium chloride, and sodium chloride are equally effective. Functionally, catalyzes the reversible reduction of methenyl-H(4)MPT(+) to methylene-H(4)MPT. The sequence is that of 5,10-methenyltetrahydromethanopterin hydrogenase from Methanopyrus kandleri (strain AV19 / DSM 6324 / JCM 9639 / NBRC 100938).